Consider the following 605-residue polypeptide: Elongation factor 4 (605 aa).

The region spanning 9–191 (DTIRNFCIIA…AIIKRVPAPV (183 aa)) is the tr-type G domain. GTP contacts are provided by residues 21 to 26 (DHGKST) and 138 to 141 (NKID).

This sequence belongs to the TRAFAC class translation factor GTPase superfamily. Classic translation factor GTPase family. LepA subfamily.

It is found in the cell inner membrane. It carries out the reaction GTP + H2O = GDP + phosphate + H(+). In terms of biological role, required for accurate and efficient protein synthesis under certain stress conditions. May act as a fidelity factor of the translation reaction, by catalyzing a one-codon backward translocation of tRNAs on improperly translocated ribosomes. Back-translocation proceeds from a post-translocation (POST) complex to a pre-translocation (PRE) complex, thus giving elongation factor G a second chance to translocate the tRNAs correctly. Binds to ribosomes in a GTP-dependent manner. The protein is Elongation factor 4 of Chlorobium phaeobacteroides (strain BS1).